The sequence spans 158 residues: Cyclic pyranopterin monophosphate synthase (158 aa).

Substrate-binding positions include 75-77 and 113-114; these read LCH and ME. Asp-128 is an active-site residue.

This sequence belongs to the MoaC family. In terms of assembly, homohexamer; trimer of dimers.

It catalyses the reaction (8S)-3',8-cyclo-7,8-dihydroguanosine 5'-triphosphate = cyclic pyranopterin phosphate + diphosphate. It functions in the pathway cofactor biosynthesis; molybdopterin biosynthesis. In terms of biological role, catalyzes the conversion of (8S)-3',8-cyclo-7,8-dihydroguanosine 5'-triphosphate to cyclic pyranopterin monophosphate (cPMP). This chain is Cyclic pyranopterin monophosphate synthase, found in Ralstonia nicotianae (strain ATCC BAA-1114 / GMI1000) (Ralstonia solanacearum).